A 163-amino-acid polypeptide reads, in one-letter code: COP9 signalosome complex subunit 9 (163 aa).

Residues 5–120 (EVLHAVLDPK…SVGRRIKVLR (116 aa)) form the PCI domain.

As to quaternary structure, component of a COP9 signalosome-like (CSN) complex.

Its subcellular location is the cytoplasm. It is found in the nucleus. In terms of biological role, component of the COP9 signalosome (CSN) complex that acts as a regulator of the ubiquitin (Ubl) conjugation pathway by mediating the deneddylation of the cullin subunit of SCF-type E3 ubiquitin-protein ligase complexes. The complex is involved in the regulation of the mating pheromone response. The polypeptide is COP9 signalosome complex subunit 9 (CSN9) (Eremothecium gossypii (strain ATCC 10895 / CBS 109.51 / FGSC 9923 / NRRL Y-1056) (Yeast)).